The chain runs to 64 residues: uncharacterized protein (64 aa).

A helical membrane pass occupies residues 41 to 61; that stretch reads VFLALKVLGIMVLFYLLDAII.

The protein localises to the membrane. This is an uncharacterized protein from Acheta domesticus (House cricket).